A 523-amino-acid polypeptide reads, in one-letter code: 26S proteasome regulatory subunit RPN3 (523 aa).

An N-acetylalanine modification is found at Ala-2. The 181-residue stretch at Ala-270 to Asn-450 folds into the PCI domain. Ser-454 is subject to Phosphoserine. Residues Arg-480–Asn-495 are compositionally biased toward basic and acidic residues. Residues Arg-480 to Leu-523 are disordered. Residues Gly-496 to Leu-523 are compositionally biased toward acidic residues.

It belongs to the proteasome subunit S3 family. The 26S proteasome is composed of a core protease, known as the 20S proteasome, capped at one or both ends by the 19S regulatory complex (RC). The RC is composed of at least 18 different subunits in two subcomplexes, the base and the lid, which form the portions proximal and distal to the 20S proteolytic core, respectively. Post-translationally, N-acetylated by NAT1.

Acts as a regulatory subunit of the 26S proteasome which is involved in the ATP-dependent degradation of ubiquitinated proteins. The polypeptide is 26S proteasome regulatory subunit RPN3 (RPN3) (Saccharomyces cerevisiae (strain ATCC 204508 / S288c) (Baker's yeast)).